Consider the following 323-residue polypeptide: o-succinylbenzoate synthase (323 aa).

Catalysis depends on Lys134, which acts as the Proton donor. Mg(2+) contacts are provided by Asp162, Glu191, and Asp214. The Proton acceptor role is filled by Lys236.

Belongs to the mandelate racemase/muconate lactonizing enzyme family. MenC type 1 subfamily. Requires a divalent metal cation as cofactor.

The catalysed reaction is (1R,6R)-6-hydroxy-2-succinyl-cyclohexa-2,4-diene-1-carboxylate = 2-succinylbenzoate + H2O. Its pathway is quinol/quinone metabolism; 1,4-dihydroxy-2-naphthoate biosynthesis; 1,4-dihydroxy-2-naphthoate from chorismate: step 4/7. It functions in the pathway quinol/quinone metabolism; menaquinone biosynthesis. In terms of biological role, converts 2-succinyl-6-hydroxy-2,4-cyclohexadiene-1-carboxylate (SHCHC) to 2-succinylbenzoate (OSB). This chain is o-succinylbenzoate synthase, found in Proteus mirabilis (strain HI4320).